The chain runs to 230 residues: Large ribosomal subunit protein uL1 (230 aa).

Belongs to the universal ribosomal protein uL1 family. As to quaternary structure, part of the 50S ribosomal subunit.

Its function is as follows. Binds directly to 23S rRNA. The L1 stalk is quite mobile in the ribosome, and is involved in E site tRNA release. Functionally, protein L1 is also a translational repressor protein, it controls the translation of the L11 operon by binding to its mRNA. The protein is Large ribosomal subunit protein uL1 of Bradyrhizobium diazoefficiens (strain JCM 10833 / BCRC 13528 / IAM 13628 / NBRC 14792 / USDA 110).